We begin with the raw amino-acid sequence, 744 residues long: Kinesin-like protein KIF2A (744 aa).

The interval 66 to 186 (LVPDEEIEPS…QQELREKRAQ (121 aa)) is disordered. Serine 75 is subject to Phosphoserine. 2 positions are modified to phosphothreonine: threonine 78 and threonine 97. Serine 100 bears the Phosphoserine mark. N6-acetyllysine is present on lysine 102. Residues 123–140 (FPEQSSSAQQNGSVSDIS) are compositionally biased toward polar residues. 2 positions are modified to phosphoserine: serine 135 and serine 140. Residues 154 to 187 (RRKSNCVKEVEKLQEKREKRRLQQQELREKRAQD) adopt a coiled-coil conformation. Residues 159–186 (CVKEVEKLQEKREKRRLQQQELREKRAQ) are compositionally biased toward basic and acidic residues. Residues 223–553 (RICVCVRKRP…LRYANRVKEF (331 aa)) enclose the Kinesin motor domain. Residue 313-320 (GQTGSGKT) coordinates ATP. A coiled-coil region spans residues 698-737 (ATQLEAILEQKIDILTELRDKVKSFRAALQEEEQASKQIN).

It belongs to the TRAFAC class myosin-kinesin ATPase superfamily. Kinesin family. MCAK/KIF2 subfamily. Interacts with AURKA and PLK1. Interacts with PSRC1. Interacts with MCRS1; the interaction enhances recruitment of KIF2A to the minus ends of spindle microtubules which promotes chromosome alignment.

Its subcellular location is the cytoplasm. The protein resides in the cytoskeleton. It is found in the microtubule organizing center. The protein localises to the centrosome. It localises to the spindle pole. Its subcellular location is the spindle. Its function is as follows. Plus end-directed microtubule-dependent motor required for normal brain development. May regulate microtubule dynamics during axonal growth. Required for normal progression through mitosis. Required for normal congress of chromosomes at the metaphase plate. Required for normal spindle dynamics during mitosis. Promotes spindle turnover. Implicated in formation of bipolar mitotic spindles. Has microtubule depolymerization activity. This chain is Kinesin-like protein KIF2A, found in Pongo abelii (Sumatran orangutan).